The sequence spans 428 residues: Enolase (428 aa).

Gln-162 contacts (2R)-2-phosphoglycerate. Residue Glu-204 is the Proton donor of the active site. The Mg(2+) site is built by Asp-241, Glu-286, and Asp-313. (2R)-2-phosphoglycerate-binding residues include Lys-338, Arg-367, Ser-368, and Lys-389. Lys-338 functions as the Proton acceptor in the catalytic mechanism.

Belongs to the enolase family. Component of the RNA degradosome, a multiprotein complex involved in RNA processing and mRNA degradation. It depends on Mg(2+) as a cofactor.

The protein localises to the cytoplasm. The protein resides in the secreted. It localises to the cell surface. The enzyme catalyses (2R)-2-phosphoglycerate = phosphoenolpyruvate + H2O. It participates in carbohydrate degradation; glycolysis; pyruvate from D-glyceraldehyde 3-phosphate: step 4/5. In terms of biological role, catalyzes the reversible conversion of 2-phosphoglycerate (2-PG) into phosphoenolpyruvate (PEP). It is essential for the degradation of carbohydrates via glycolysis. The chain is Enolase from Vesicomyosocius okutanii subsp. Calyptogena okutanii (strain HA).